Here is a 567-residue protein sequence, read N- to C-terminus: Urease subunit alpha (567 aa).

Ni(2+)-binding residues include H134, H136, and K217. Position 217 is an N6-carboxylysine (K217). H219 contacts substrate. Positions 246 and 272 each coordinate Ni(2+). H320 (proton donor) is an active-site residue. Residue D360 coordinates Ni(2+).

This sequence belongs to the metallo-dependent hydrolases superfamily. Urease alpha subunit family. Heterotrimer of UreA (gamma), UreB (beta) and UreC (alpha) subunits. Three heterotrimers associate to form the active enzyme. Ni cation is required as a cofactor. Carboxylation allows a single lysine to coordinate two nickel ions.

The protein resides in the cytoplasm. It carries out the reaction urea + 2 H2O + H(+) = hydrogencarbonate + 2 NH4(+). The protein operates within nitrogen metabolism; urea degradation; CO(2) and NH(3) from urea (urease route): step 1/1. The protein is Urease subunit alpha of Polynucleobacter asymbioticus (strain DSM 18221 / CIP 109841 / QLW-P1DMWA-1) (Polynucleobacter necessarius subsp. asymbioticus).